The following is a 660-amino-acid chain: UvrABC system protein B (660 aa).

In terms of domain architecture, Helicase ATP-binding spans 24 to 177 (KGFKEGNQFE…DDLARALIDL (154 aa)). 37–44 (GVTGSGKT) serves as a coordination point for ATP. The Beta-hairpin signature appears at 90 to 113 (YYDYYQPEAYVPQSDTYIAKDSSV). Positions 428–594 (QIDDLVSEVN…TIQKSVRDLI (167 aa)) constitute a Helicase C-terminal domain. Residues 620–655 (EKHIADIEKKMKKAAAELNFEAAAEYRDKLIMLKNT) enclose the UVR domain.

The protein belongs to the UvrB family. As to quaternary structure, forms a heterotetramer with UvrA during the search for lesions. Interacts with UvrC in an incision complex.

It localises to the cytoplasm. In terms of biological role, the UvrABC repair system catalyzes the recognition and processing of DNA lesions. A damage recognition complex composed of 2 UvrA and 2 UvrB subunits scans DNA for abnormalities. Upon binding of the UvrA(2)B(2) complex to a putative damaged site, the DNA wraps around one UvrB monomer. DNA wrap is dependent on ATP binding by UvrB and probably causes local melting of the DNA helix, facilitating insertion of UvrB beta-hairpin between the DNA strands. Then UvrB probes one DNA strand for the presence of a lesion. If a lesion is found the UvrA subunits dissociate and the UvrB-DNA preincision complex is formed. This complex is subsequently bound by UvrC and the second UvrB is released. If no lesion is found, the DNA wraps around the other UvrB subunit that will check the other stand for damage. The sequence is that of UvrABC system protein B from Agathobacter rectalis (strain ATCC 33656 / DSM 3377 / JCM 17463 / KCTC 5835 / VPI 0990) (Eubacterium rectale).